The following is a 378-amino-acid chain: MTKPAILALADGSIFRGEAIGADGQTVGEVVFNTAMTGYQEILTDPSYAQQIVTLTYPHIGNTGTTPEDAEANRVWAAGLIIRDLPLIASNWRSKQSLPDYLKANGTVAIAGIDTRRLTRILREKGSQNGCILAGADATEERALELARAFPGLKGMDLAKEVTTAERYEWRSSVWNLESDSHPEIPAGELPYHVVAYDYGVKLNILRMLVARGCRLTVVPAQTPASEVLALNPDGIFLSNGPGDPEPCDYAIQAIREFLDTEIPVFGICLGHQLLALASGAKTLKMGHGHHGANHPVQDLDSGVVMITSQNHGFAVDESTLPDNLRATHKSLFDGTLQGIERTDKVAFSFQGHPEASPGPHDVAPLFDRFISAMAERR.

The CPSase stretch occupies residues Met1 to Glu189. L-glutamine contacts are provided by Ser47, Gly241, and Gly243. Residues His193–Arg378 enclose the Glutamine amidotransferase type-1 domain. Cys269 functions as the Nucleophile in the catalytic mechanism. Residues Leu270, Gln273, Asn311, Gly313, and Phe314 each coordinate L-glutamine. Catalysis depends on residues His353 and Glu355.

It belongs to the CarA family. In terms of assembly, composed of two chains; the small (or glutamine) chain promotes the hydrolysis of glutamine to ammonia, which is used by the large (or ammonia) chain to synthesize carbamoyl phosphate. Tetramer of heterodimers (alpha,beta)4.

The enzyme catalyses hydrogencarbonate + L-glutamine + 2 ATP + H2O = carbamoyl phosphate + L-glutamate + 2 ADP + phosphate + 2 H(+). It catalyses the reaction L-glutamine + H2O = L-glutamate + NH4(+). Its pathway is amino-acid biosynthesis; L-arginine biosynthesis; carbamoyl phosphate from bicarbonate: step 1/1. It participates in pyrimidine metabolism; UMP biosynthesis via de novo pathway; (S)-dihydroorotate from bicarbonate: step 1/3. Functionally, small subunit of the glutamine-dependent carbamoyl phosphate synthetase (CPSase). CPSase catalyzes the formation of carbamoyl phosphate from the ammonia moiety of glutamine, carbonate, and phosphate donated by ATP, constituting the first step of 2 biosynthetic pathways, one leading to arginine and/or urea and the other to pyrimidine nucleotides. The small subunit (glutamine amidotransferase) binds and cleaves glutamine to supply the large subunit with the substrate ammonia. The polypeptide is Carbamoyl phosphate synthase small chain (Pseudomonas aeruginosa (strain ATCC 15692 / DSM 22644 / CIP 104116 / JCM 14847 / LMG 12228 / 1C / PRS 101 / PAO1)).